Here is a 143-residue protein sequence, read N- to C-terminus: Putative pre-16S rRNA nuclease (143 aa).

It belongs to the YqgF nuclease family.

It is found in the cytoplasm. Could be a nuclease involved in processing of the 5'-end of pre-16S rRNA. In Lactobacillus johnsonii (strain CNCM I-12250 / La1 / NCC 533), this protein is Putative pre-16S rRNA nuclease.